The sequence spans 321 residues: Annexin B10 (321 aa).

Annexin repeat units follow at residues 15–86, 87–158, 171–243, and 247–319; these read FDAS…GLMM, PPVE…LIVT, GQAK…AIVE, and SPAA…ALLG.

This sequence belongs to the annexin family.

In Drosophila melanogaster (Fruit fly), this protein is Annexin B10 (AnxB10).